Consider the following 281-residue polypeptide: Probable endonuclease 4 (281 aa).

Zn(2+) contacts are provided by His67, His107, Glu142, Asp176, His179, His211, Asp224, His226, and Glu256.

This sequence belongs to the AP endonuclease 2 family. Zn(2+) serves as cofactor.

It carries out the reaction Endonucleolytic cleavage to 5'-phosphooligonucleotide end-products.. In terms of biological role, endonuclease IV plays a role in DNA repair. It cleaves phosphodiester bonds at apurinic or apyrimidinic (AP) sites, generating a 3'-hydroxyl group and a 5'-terminal sugar phosphate. This Alkaliphilus oremlandii (strain OhILAs) (Clostridium oremlandii (strain OhILAs)) protein is Probable endonuclease 4.